The primary structure comprises 484 residues: Glutamate--tRNA ligase (484 aa).

A 'HIGH' region motif is present at residues 11-21 (PSPTGYPHLGN). 4 residues coordinate Zn(2+): cysteine 108, cysteine 110, cysteine 135, and aspartate 137. The short motif at 245–249 (KLSKR) is the 'KMSKS' region element. Lysine 248 provides a ligand contact to ATP.

This sequence belongs to the class-I aminoacyl-tRNA synthetase family. Glutamate--tRNA ligase type 1 subfamily. As to quaternary structure, monomer. It depends on Zn(2+) as a cofactor.

The protein localises to the cytoplasm. The enzyme catalyses tRNA(Glu) + L-glutamate + ATP = L-glutamyl-tRNA(Glu) + AMP + diphosphate. Its function is as follows. Catalyzes the attachment of glutamate to tRNA(Glu) in a two-step reaction: glutamate is first activated by ATP to form Glu-AMP and then transferred to the acceptor end of tRNA(Glu). In Dehalococcoides mccartyi (strain ATCC BAA-2266 / KCTC 15142 / 195) (Dehalococcoides ethenogenes (strain 195)), this protein is Glutamate--tRNA ligase.